Here is a 630-residue protein sequence, read N- to C-terminus: 1-deoxy-D-xylulose-5-phosphate synthase (630 aa).

Thiamine diphosphate-binding positions include histidine 72 and 113-115 (GHS). Aspartate 144 serves as a coordination point for Mg(2+). Residues 145-146 (GA), asparagine 173, tyrosine 284, and glutamate 367 contribute to the thiamine diphosphate site. Mg(2+) is bound at residue asparagine 173.

The protein belongs to the transketolase family. DXPS subfamily. In terms of assembly, homodimer. It depends on Mg(2+) as a cofactor. Requires thiamine diphosphate as cofactor.

It carries out the reaction D-glyceraldehyde 3-phosphate + pyruvate + H(+) = 1-deoxy-D-xylulose 5-phosphate + CO2. The protein operates within metabolic intermediate biosynthesis; 1-deoxy-D-xylulose 5-phosphate biosynthesis; 1-deoxy-D-xylulose 5-phosphate from D-glyceraldehyde 3-phosphate and pyruvate: step 1/1. Catalyzes the acyloin condensation reaction between C atoms 2 and 3 of pyruvate and glyceraldehyde 3-phosphate to yield 1-deoxy-D-xylulose-5-phosphate (DXP). The polypeptide is 1-deoxy-D-xylulose-5-phosphate synthase (Bacillus cereus (strain AH187)).